Here is a 100-residue protein sequence, read N- to C-terminus: Urease subunit gamma (100 aa).

The protein belongs to the urease gamma subunit family. As to quaternary structure, heterotrimer of UreA (gamma), UreB (beta) and UreC (alpha) subunits. Three heterotrimers associate to form the active enzyme.

The protein resides in the cytoplasm. The catalysed reaction is urea + 2 H2O + H(+) = hydrogencarbonate + 2 NH4(+). It participates in nitrogen metabolism; urea degradation; CO(2) and NH(3) from urea (urease route): step 1/1. This chain is Urease subunit gamma, found in Yersinia bercovieri.